The chain runs to 71 residues: uncharacterized protein (71 aa).

A disordered region spans residues 52–71 (KEKFERKEDEKSKPKGVRED).

This is an uncharacterized protein from Archaeoglobus fulgidus (strain ATCC 49558 / DSM 4304 / JCM 9628 / NBRC 100126 / VC-16).